Here is a 74-residue protein sequence, read N- to C-terminus: U12-theraphotoxin-Hs1a (74 aa).

The N-terminal stretch at 1-20 (MNVKILLLLVGLNLVMHSNA) is a signal peptide. A propeptide spanning residues 21–40 (TGDSETNPAETLFIEEIFRR) is cleaved from the precursor. Cystine bridges form between Cys-42/Cys-56, Cys-49/Cys-61, and Cys-55/Cys-71.

Belongs to the neurotoxin 35 family. Expressed by the venom gland.

It localises to the secreted. Putative ion channel inhibitor. The chain is U12-theraphotoxin-Hs1a from Cyriopagopus schmidti (Chinese bird spider).